The following is a 448-amino-acid chain: MSFTPGKQSSSRASSGNRSGNGILKWADQSDQSRNVQTRGRRAQPKQTATSQQPSGGNVVPYYSWFSGITQFQKGKEFEFAEGQGVPIAPGVPATEAKGYWYRHNRRSFKTRDGNQRQLLPRWYFYYLGTGPHAKDQYGTDIDGVFWVASNQADVNTPADILDRDPSSDEAIPTRFPPGTVLPQGYYIEGSGRSAPNSRSTSRASSRASSAGSRSRANSGNRTPTSGVTPDMADQIVSLVLAKLGKDATKPQQVTKQTAKEIRQKILNKPRQKRSPNKQCTVQQCFGKRGPNQNFGGGEMLKLGTSDPQFPILAELAPTAGAFFFGSRLELAKVQNLSGNLDEPQKDVYELRYNGAIRFDSTLSGFETIMKVLNENLNAYQQQDGMMNMSPKPQRQRGQKNGQGENDNISVAAPKSRVQQNKSRELTAEDISLLKKMDEPYTEDTSEI.

Residues 1-55 are disordered; the sequence is MSFTPGKQSSSRASSGNRSGNGILKWADQSDQSRNVQTRGRRAQPKQTATSQQPS. The segment covering 9-22 has biased composition (low complexity); the sequence is SSSRASSGNRSGNG. 2 stretches are compositionally biased toward polar residues: residues 29 to 38 and 45 to 55; these read QSDQSRNVQT and PKQTATSQQPS. Residues 52–194 are RNA-binding; that stretch reads QQPSGGNVVP…GYYIEGSGRS (143 aa). In terms of domain architecture, CoV N NTD spans 61 to 190; it reads PYYSWFSGIT…VLPQGYYIEG (130 aa). Positions 106, 122, and 164 each coordinate RNA. A disordered region spans residues 157-231; it reads TPADILDRDP…RTPTSGVTPD (75 aa). Phosphoserine; by host is present on serine 167. Position 174 is a phosphothreonine; by host (threonine 174). Serine 191 carries the post-translational modification Phosphoserine; by host. A compositionally biased stretch (low complexity) spans 193–223; that stretch reads RSAPNSRSTSRASSRASSAGSRSRANSGNRT. A CoV N CTD domain is found at 259 to 384; the sequence is AKEIRQKILN…ENLNAYQQQD (126 aa). The interval 266 to 384 is dimerization; the sequence is ILNKPRQKRS…ENLNAYQQQD (119 aa). Positions 385-448 are disordered; the sequence is GMMNMSPKPQ…EPYTEDTSEI (64 aa). Serine 390 carries the phosphoserine; by host modification. The span at 399–409 shows a compositional bias: polar residues; the sequence is QKNGQGENDNI. The segment covering 422–439 has biased composition (basic and acidic residues); that stretch reads KSRELTAEDISLLKKMDE. At serine 423 the chain carries Phosphoserine; by host. Phosphothreonine; by host is present on threonine 427.

It belongs to the betacoronavirus nucleocapsid protein family. Homooligomer. Both monomeric and oligomeric forms interact with RNA. Interacts with protein M. Interacts with NSP3; this interaction serves to tether the genome to the newly translated replicase-transcriptase complex at a very early stage of infection. ADP-ribosylated. The ADP-ribosylation is retained in the virion during infection. Post-translationally, phosphorylated on serine and threonine residues.

Its subcellular location is the virion. The protein localises to the host endoplasmic reticulum-Golgi intermediate compartment. It localises to the host Golgi apparatus. Functionally, packages the positive strand viral genome RNA into a helical ribonucleocapsid (RNP) and plays a fundamental role during virion assembly through its interactions with the viral genome and membrane protein M. Plays an important role in enhancing the efficiency of subgenomic viral RNA transcription as well as viral replication. In Bovine coronavirus (strain F15) (BCoV), this protein is Nucleoprotein.